Reading from the N-terminus, the 444-residue chain is Tubulin beta chain (444 aa).

The short motif at 1–4 (MREI) is the MREI motif element. Gln11 is a GTP binding site. A Phosphoserine modification is found at Ser40. Thr55 bears the Phosphothreonine mark. Position 58 is an N6-acetyllysine; alternate (Lys58). Residue Lys58 is modified to N6-succinyllysine; alternate. Residue Lys58 forms a Glycyl lysine isopeptide (Lys-Gly) (interchain with G-Cter in ubiquitin); alternate linkage. GTP-binding residues include Glu69, Ser138, Gly142, Thr143, and Gly144. Glu69 is a Mg(2+) binding site. Ser172 carries the post-translational modification Phosphoserine; by CDK1. GTP-binding residues include Asn204 and Asn226. Phosphothreonine occurs at positions 285 and 290. Arg318 is subject to Omega-N-methylarginine. Lys324 is covalently cross-linked (Glycyl lysine isopeptide (Lys-Gly) (interchain with G-Cter in ubiquitin)). The interval 423–444 (QQYQDATAEEEEDFGEEAEEEA) is disordered. Residues 429 to 444 (TAEEEEDFGEEAEEEA) show a composition bias toward acidic residues. Glu434, Glu438, Glu439, and Glu441 each carry 5-glutamyl polyglutamate. 5-glutamyl glycine occurs at positions 438, 439, 441, 442, and 443.

It belongs to the tubulin family. Heterodimer of alpha and beta chains. A typical microtubule is a hollow water-filled tube with an outer diameter of 25 nm and an inner diameter of 15 nM. Alpha-beta heterodimers associate head-to-tail to form protofilaments running lengthwise along the microtubule wall with the beta-tubulin subunit facing the microtubule plus end conferring a structural polarity. Microtubules usually have 13 protofilaments but different protofilament numbers can be found in some organisms and specialized cells. Interacts with CIMAP3. Interacts with DIAPH1. Interacts with MX1. May interact with RNABP10. Interacts with CFAP157. Nascent tubulin polypeptide interacts (via beta-tubulin MREI motif) with TTC5/STRAP; this interaction results in tubulin mRNA-targeted degradation. Requires Mg(2+) as cofactor. In terms of processing, some glutamate residues at the C-terminus are polyglycylated, resulting in polyglycine chains on the gamma-carboxyl group. Glycylation is mainly limited to tubulin incorporated into axonemes (cilia and flagella) whereas glutamylation is prevalent in neuronal cells, centrioles, axonemes, and the mitotic spindle. Both modifications can coexist on the same protein on adjacent residues, and lowering polyglycylation levels increases polyglutamylation, and reciprocally. Cilia and flagella glycylation is required for their stability and maintenance. Flagella glycylation controls sperm motility. Post-translationally, some glutamate residues at the C-terminus are polyglutamylated, resulting in polyglutamate chains on the gamma-carboxyl group. Polyglutamylation plays a key role in microtubule severing by spastin (SPAST). SPAST preferentially recognizes and acts on microtubules decorated with short polyglutamate tails: severing activity by SPAST increases as the number of glutamates per tubulin rises from one to eight, but decreases beyond this glutamylation threshold. Glutamylation is also involved in cilia motility. Phosphorylated on Ser-172 by CDK1 during the cell cycle, from metaphase to telophase, but not in interphase. This phosphorylation inhibits tubulin incorporation into microtubules.

Its subcellular location is the cytoplasm. It localises to the cytoskeleton. Functionally, tubulin is the major constituent of microtubules, a cylinder consisting of laterally associated linear protofilaments composed of alpha- and beta-tubulin heterodimers. Microtubules grow by the addition of GTP-tubulin dimers to the microtubule end, where a stabilizing cap forms. Below the cap, tubulin dimers are in GDP-bound state, owing to GTPase activity of alpha-tubulin. The sequence is that of Tubulin beta chain (TUBB) from Sus scrofa (Pig).